A 462-amino-acid polypeptide reads, in one-letter code: Lysophospholipid acyltransferase 1 (462 aa).

A run of 9 helical transmembrane segments spans residues 9-29 (SIGV…TIPV), 52-72 (FLSY…PMTI), 84-104 (CGII…VFYM), 158-178 (SLIE…GPVY), 211-231 (AILQ…QYPL), 263-283 (YFIW…FSGW), 353-373 (AVWH…ALMI), 396-416 (IMVF…AVGF), and 431-451 (VYYI…VVPA). His356 is an active-site residue.

Belongs to the membrane-bound acyltransferase family. Expressed in roots, rosette leaves, petals, stigma, chalazal endosperm of developing seeds and vascular bundles of siliques.

Its subcellular location is the endoplasmic reticulum membrane. It catalyses the reaction a 1-acyl-sn-glycero-3-phosphocholine + an acyl-CoA = a 1,2-diacyl-sn-glycero-3-phosphocholine + CoA. The enzyme catalyses 1-(9Z-octadecenoyl)-sn-glycero-3-phosphocholine + (9Z)-octadecenoyl-CoA = 1,2-di-(9Z-octadecenoyl)-sn-glycero-3-phosphocholine + CoA. It carries out the reaction 1-(9Z-octadecenoyl)-sn-glycero-3-phosphocholine + (9Z,12Z)-octadecadienoyl-CoA = 1-(9Z)-octadecenoyl-2-(9Z,12Z)-octadecadienoyl-sn-glycero-3-phosphocholine + CoA. The catalysed reaction is (9Z,12Z,15Z)-octadecatrienoyl-CoA + 1-(9Z-octadecenoyl)-sn-glycero-3-phosphocholine = 1-(9Z-octadecaenoyl)-2-(9Z,12Z,15Z-octadecatrienoyl)-sn-glycero-3-phosphocholine + CoA. It catalyses the reaction a 1-acyl-sn-glycero-3-phosphoethanolamine + an acyl-CoA = a 1,2-diacyl-sn-glycero-3-phosphoethanolamine + CoA. The enzyme catalyses a 1-acyl-sn-glycero-3-phospho-L-serine + an acyl-CoA = a 1,2-diacyl-sn-glycero-3-phospho-L-serine + CoA. Its function is as follows. Lysophospholipid acyltransferase with broad specificity. Mediates the conversion of lysophosphatidylethanolamine (1-acyl-sn-glycero-3-phosphoethanolamine or LPE) into phosphatidylethanolamine (1,2-diacyl-sn-glycero-3-phosphoethanolamine or PE) (LPEAT activity). Catalyzes the acylation of lysophosphatidylserine (1-acyl-2-hydroxy-sn-glycero-3-phospho-L-serine or LPS) into phosphatidylserine (1,2-diacyl-sn-glycero-3-phospho-L-serine or PS) (LPSAT activity). Can convert lysophosphatidylcholine (1-acyl-sn-glycero-3-phosphocholine or LPC) into phosphatidylcholine (1,2-diacyl-sn-glycero-3-phosphocholine or PC) (LPCAT activity). Exhibits preference for C18-unsaturated acyl-CoA when transferring an acyl group to lysophosphatidylcholine. Can also utilize lysophosphatidylglycerol (LPG) as substrate in vitro. Has neither activity towards lysophosphatidic acid (LPA) nor lysophosphatidylinositol (LPI). Lysophospholipid acyltransferases catalyze the reacylation step of the phospholipid remodeling pathway also known as the Lands cycle. The primary function of the Lands cycle is to provide a route for acyl remodeling to modify fatty acid (FA) composition of phospholipids derived from the Kennedy pathway. Is involved in PC acyl editing and phosphocholine headgroup exchange between PC and diacylglycerols. This processes control the majority of acyl fluxes through PC to provide polyunsaturated fatty acids for triacylglycerols synthesis in seeds. Involved with LPCAT2 in the direct incorporation of newly synthesized fatty acids exported form the chloroplast into PC through acyl editing. This Arabidopsis thaliana (Mouse-ear cress) protein is Lysophospholipid acyltransferase 1.